The following is a 90-amino-acid chain: DNA-binding protein HU-beta (90 aa).

It belongs to the bacterial histone-like protein family. As to quaternary structure, heterodimer of an alpha and a beta chain.

Its function is as follows. Histone-like DNA-binding protein which is capable of wrapping DNA to stabilize it, and thus to prevent its denaturation under extreme environmental conditions. This is DNA-binding protein HU-beta (hupB) from Escherichia coli O6:H1 (strain CFT073 / ATCC 700928 / UPEC).